The chain runs to 335 residues: Tetraacyldisaccharide 4'-kinase (335 aa).

58-65 (TVGGSGKT) lines the ATP pocket.

This sequence belongs to the LpxK family.

The catalysed reaction is a lipid A disaccharide + ATP = a lipid IVA + ADP + H(+). It participates in glycolipid biosynthesis; lipid IV(A) biosynthesis; lipid IV(A) from (3R)-3-hydroxytetradecanoyl-[acyl-carrier-protein] and UDP-N-acetyl-alpha-D-glucosamine: step 6/6. Functionally, transfers the gamma-phosphate of ATP to the 4'-position of a tetraacyldisaccharide 1-phosphate intermediate (termed DS-1-P) to form tetraacyldisaccharide 1,4'-bis-phosphate (lipid IVA). The protein is Tetraacyldisaccharide 4'-kinase of Shewanella sp. (strain MR-4).